We begin with the raw amino-acid sequence, 224 residues long: UPF0758 protein Psyr_0222 (224 aa).

The MPN domain maps to 102–224 (ALENPTQVRS…PLSMVERGLM (123 aa)). Zn(2+)-binding residues include H173, H175, and D186. A JAMM motif motif is present at residues 173 to 186 (HNHPSGITTPSRSD).

The protein belongs to the UPF0758 family.

The sequence is that of UPF0758 protein Psyr_0222 from Pseudomonas syringae pv. syringae (strain B728a).